Reading from the N-terminus, the 293-residue chain is Cytochrome c biogenesis protein CcsA (293 aa).

8 consecutive transmembrane segments (helical) span residues 12 to 32 (INIL…AKLT), 39 to 59 (VFSL…GMLL), 78 to 98 (LFLS…LSII), 99 to 119 (GAIG…ILPP), 142 to 162 (VMIF…IYVI), 216 to 236 (FISL…VWAN), 250 to 267 (TWAL…HIRI), and 273 to 293 (KIYA…VTWE).

This sequence belongs to the CcmF/CycK/Ccl1/NrfE/CcsA family. As to quaternary structure, may interact with Ccs1.

It is found in the plastid. It localises to the chloroplast thylakoid membrane. Its function is as follows. Required during biogenesis of c-type cytochromes (cytochrome c6 and cytochrome f) at the step of heme attachment. This chain is Cytochrome c biogenesis protein CcsA, found in Cyanidium caldarium (Red alga).